A 730-amino-acid chain; its full sequence is Catalase R (730 aa).

His105 is a catalytic residue. Heme is bound at residue Tyr392. The interval 403-433 (PNFEQIPVNRPRKPVHNNNRDGFGQQQIPTN) is disordered.

This sequence belongs to the catalase family. The cofactor is heme.

It carries out the reaction 2 H2O2 = O2 + 2 H2O. Functionally, occurs in almost all aerobically respiring organisms and serves to protect cells from the toxic effects of hydrogen peroxide. The protein is Catalase R (catR) of Aspergillus niger.